A 156-amino-acid polypeptide reads, in one-letter code: Small ribosomal subunit protein uS7 (156 aa).

The protein belongs to the universal ribosomal protein uS7 family. Part of the 30S ribosomal subunit. Contacts proteins S9 and S11.

Functionally, one of the primary rRNA binding proteins, it binds directly to 16S rRNA where it nucleates assembly of the head domain of the 30S subunit. Is located at the subunit interface close to the decoding center, probably blocks exit of the E-site tRNA. In Pelobacter propionicus (strain DSM 2379 / NBRC 103807 / OttBd1), this protein is Small ribosomal subunit protein uS7.